The sequence spans 527 residues: UPF0053 protein YegH (527 aa).

5 helical membrane-spanning segments follow: residues 14–34 (ITLI…IAIL), 51–71 (LLLA…LVTL), 81–101 (FTFS…LFKA), 145–165 (ITAV…VIAI), and 185–205 (IVIL…AEGF). CBS domains follow at residues 306–366 (MTSR…GEPL) and 371–429 (LIRQ…PNEV).

The protein belongs to the UPF0053 family.

It is found in the cell membrane. The sequence is that of UPF0053 protein YegH (yegH) from Escherichia coli (strain K12).